We begin with the raw amino-acid sequence, 218 residues long: uncharacterized protein (218 aa).

This is an uncharacterized protein from Treponema pallidum (strain Nichols).